The chain runs to 523 residues: Cryptochrome DASH (523 aa).

Residues 6–142 (RVIICLLRND…KYQTFWGSTL (137 aa)) enclose the Photolyase/cryptochrome alpha/beta domain. Disordered stretches follow at residues 174-211 (RPTFQMPDKLKPLPSGLEEGSVPSHEDFDQQDPLTDPR) and 486-523 (KPAGSWEKSARRGKGPSHTPKQHKNRGIDFYFSRNKDV). Residues 496-510 (RRGKGPSHTPKQHKN) show a composition bias toward basic residues.

It belongs to the DNA photolyase class-1 family. It depends on FAD as a cofactor. The cofactor is (6R)-5,10-methylene-5,6,7,8-tetrahydrofolate.

Functionally, may have a photoreceptor function. Has weak cyclobutyl pyrimidine photolyase activity when expressed in E.coli and when tested in vitro. The sequence is that of Cryptochrome DASH (cry-dash) from Xenopus laevis (African clawed frog).